Reading from the N-terminus, the 219-residue chain is Thiopurine S-methyltransferase (219 aa).

Residues Trp-10, Leu-45, Glu-66, and Arg-123 each contribute to the S-adenosyl-L-methionine site.

This sequence belongs to the class I-like SAM-binding methyltransferase superfamily. TPMT family.

It localises to the cytoplasm. It carries out the reaction S-adenosyl-L-methionine + a thiopurine = S-adenosyl-L-homocysteine + a thiopurine S-methylether.. The protein is Thiopurine S-methyltransferase of Shewanella pealeana (strain ATCC 700345 / ANG-SQ1).